We begin with the raw amino-acid sequence, 503 residues long: MAETQPLVFVLMSISAILTAGLPINDDASLLISVNPETQQLVDSLGRERFFHGTNVVVKHKPYHPSVEGYDNTSFSEVDMKILQDLGLNTIRLGMMLPGYVPTRGNYNETYLKIIQEIVSKAAKYGIYTLLDMHQDVMSAKFCVEGFPDWAVNTGNADNFPFPLEDKYPLNLQTGYPYPKDCAKHAWGDYYFTEAAAAAFQNFYNNTDGLLDAWADFWKKTAQGFKDYKSVIGYELINEPFAGDIYRDPSLMIPGVADERNLAPAYDVIHKAIRTVDEQHSIFFEGVTWDYFAAGFSKVPGGDAYRNRSVLSYHYYEPPDFNKKFQFEVRMEDLRRLKCGGFLTELLTVGDTAKDMSDMLELFDICDQHKQSWMGWLYKSYGCYKQHLGCLTDSMHDETGHLRDIVLQNTTRTYPQAVAGHTIGYKFDRITKKFDLSFVVTADCRSTESIVYFNKDLHYSNGYDVTVFPKDSVTWKQVEKKIIINHSQKLSAGTTVTFSLVAK.

The first 21 residues, 1–21, serve as a signal peptide directing secretion; the sequence is MAETQPLVFVLMSISAILTAG. N-linked (GlcNAc...) asparagine glycans are attached at residues asparagine 72, asparagine 108, and asparagine 205. The Proton donor role is filled by glutamate 239. Residues asparagine 307, asparagine 409, and asparagine 485 are each glycosylated (N-linked (GlcNAc...) asparagine).

The protein belongs to the glycosyl hydrolase 5 (cellulase A) family.

It is found in the secreted. The protein localises to the nematocyst. It catalyses the reaction an oligoglycosyl-(1-&gt;4)-beta-D-glucosyl-(1&lt;-&gt;1)-ceramide + H2O = an oligoglycosyl-(1-&gt;4)-D-glucose + an N-acyl-sphingoid base. With respect to regulation, completely inhibited by Hg(2+). Cu(2+) and zinc have no effect on enzyme activity. Lithium, potassium, manganese, Ni(2+), calcium, magnesium and EDTA have no significant effect on enzyme activity. Enzyme requires presence of detergents such as Triton X-100 and Lubrol PX for the hydrolysis of glycosphingolipids. Taurodeoxycholate strongly inhibits the enzyme activity and SDS completely inhibits the enzyme activity. Its function is as follows. Hydrolysis of the glycosidic linkage between oligosaccharides and ceramides of glycosphingolipids, especially b-series polysialogangliosides. This is Endoglycoceramidase from Cyanea nozakii (Jellyfish).